The following is a 241-amino-acid chain: Fatty acid metabolism regulator protein (241 aa).

One can recognise an HTH gntR-type domain in the interval 11–79 (QSPAALAEEY…HGKPTKVNNI (69 aa)). The H-T-H motif DNA-binding region spans 39–58 (ERDLADKIGVTRTTLREVLQ).

As to quaternary structure, homodimer.

Its subcellular location is the cytoplasm. Functionally, multifunctional regulator of fatty acid metabolism. The chain is Fatty acid metabolism regulator protein from Haemophilus influenzae (strain PittEE).